The sequence spans 622 residues: Chaperone protein HscA homolog (622 aa).

It belongs to the heat shock protein 70 family.

Its function is as follows. Chaperone involved in the maturation of iron-sulfur cluster-containing proteins. Has a low intrinsic ATPase activity which is markedly stimulated by HscB. The protein is Chaperone protein HscA homolog of Burkholderia orbicola (strain MC0-3).